A 513-amino-acid chain; its full sequence is Probable tubulin polyglutamylase ttll-15 (513 aa).

The 339-residue stretch at 73–411 (VTGSYESAHT…STPITKEADI (339 aa)) folds into the TTL domain. Residues 216–219 (QKFV), K229, and D231 contribute to the ATP site.

The protein belongs to the tubulin--tyrosine ligase family. In terms of tissue distribution, expressed in hypodermis and pharyngeal muscles.

In terms of biological role, probable polyglutamylase that forms polyglutamate side chains on tubulin. Probably acts when complexed with other proteins. Appears to be dispensable for polar spindle formation in dividing embryonic cells, for cilia-dependent osmotic avoidance and for male mating behavior. Regulates microtubule dynamics in uterine muscle cells. The chain is Probable tubulin polyglutamylase ttll-15 from Caenorhabditis elegans.